The primary structure comprises 284 residues: Tropomyosin beta chain (284 aa).

Met1 is modified (N-acetylmethionine). The segment at 1–78 is disordered; sequence MDAIKKKMQM…EKLEQAEKKA (78 aa). The stretch at 1-284 forms a coiled coil; sequence MDAIKKKMQM…DNALNDITSL (284 aa). Composition is skewed to basic and acidic residues over residues 12 to 40 and 51 to 78; these read KLDKENAIDRAEQAEADKKQAEDRCKQLE and KGTEDEVEKYSESVKDAQEKLEQAEKKA. Thr53 bears the Phosphothreonine mark. Phosphoserine; by PIK3CG is present on Ser61. Thr79 carries the phosphothreonine modification. A Phosphoserine modification is found at Ser87. Thr108 carries the post-translational modification Phosphothreonine. Residues 117–136 are disordered; the sequence is EKAADESERGMKVIENRAMK. Phosphoserine is present on residues Ser158, Ser206, and Ser215. Thr252 is subject to Phosphothreonine. Tyr261 is modified (phosphotyrosine). Ser271 is subject to Phosphoserine. Thr282 is modified (phosphothreonine). At Ser283 the chain carries Phosphoserine.

This sequence belongs to the tropomyosin family. Homodimer. Heterodimer of an alpha (TPM1, TPM3 or TPM4) and a beta (TPM2) chain. In terms of processing, phosphorylated on Ser-61 by PIK3CG. Phosphorylation on Ser-61 is required for ADRB2 internalization.

It localises to the cytoplasm. The protein localises to the cytoskeleton. Binds to actin filaments in muscle and non-muscle cells. Plays a central role, in association with the troponin complex, in the calcium dependent regulation of vertebrate striated muscle contraction. Smooth muscle contraction is regulated by interaction with caldesmon. In non-muscle cells is implicated in stabilizing cytoskeleton actin filaments. The non-muscle isoform may have a role in agonist-mediated receptor internalization. The polypeptide is Tropomyosin beta chain (Tpm2) (Mus musculus (Mouse)).